The following is a 187-amino-acid chain: Ribulose bisphosphate carboxylase small subunit, chloroplastic (187 aa).

Residues 1–56 (MASSVMSTATVATGANAAQASMIASFNGLKSAASFPVTRKQDLDITSIASNGGRVE) constitute a chloroplast transit peptide.

This sequence belongs to the RuBisCO small chain family. As to quaternary structure, heterohexadecamer of 8 large and 8 small subunits.

Its subcellular location is the plastid. It localises to the chloroplast. In terms of biological role, ruBisCO catalyzes two reactions: the carboxylation of D-ribulose 1,5-bisphosphate, the primary event in carbon dioxide fixation, as well as the oxidative fragmentation of the pentose substrate. Both reactions occur simultaneously and in competition at the same active site. Although the small subunit is not catalytic it is essential for maximal activity. This chain is Ribulose bisphosphate carboxylase small subunit, chloroplastic, found in Capsicum annuum (Capsicum pepper).